The following is a 580-amino-acid chain: mRNA-decapping enzyme 1A (580 aa).

Phosphoserine is present on serine 62. Residues 132-141 show a composition bias toward basic and acidic residues; the sequence is RSQQAARDKQ. Disordered stretches follow at residues 132 to 154, 172 to 209, and 245 to 276; these read RSQQ…DHRP, QMGD…QDKS, and LPGD…NMGI. Phosphoserine is present on residues serine 142, serine 179, and serine 180. Residues 173-196 are compositionally biased toward polar residues; it reads MGDSNISSPGLQPSTQISNLGSTE. Positions 253-264 are enriched in low complexity; that stretch reads EPSSFLPFSFEP. A phosphoserine mark is found at serine 319 and serine 334. Residues 343-359 show a composition bias toward polar residues; the sequence is QAVKTTPRQRSPLSSQP. Residues 343 to 371 are disordered; the sequence is QAVKTTPRQRSPLSSQPVPELSQASLAAS. Threonine 348 is modified (phosphothreonine). Serine 353 carries the phosphoserine modification. Arginine 376 bears the Asymmetric dimethylarginine mark. Threonine 401 carries the post-translational modification Phosphothreonine. Residues serine 422, serine 520, serine 521, and serine 523 each carry the phosphoserine modification. Residues 510-533 are disordered; the sequence is TRSSDLERKASSPSPLTVGTSENQ. Positions 520–531 are enriched in polar residues; the sequence is SSPSPLTVGTSE. Threonine 526 and threonine 529 each carry phosphothreonine.

This sequence belongs to the DCP1 family. Forms a complex with EDC3, DCP2, DDX6 and EDC4/HEDLS, within this complex directly interacts with EDC3. Part of a cytoplasmic complex containing proteins involved in mRNA decay, including XRN1 and LSM1. Interacts with DCP1B. Interacts with DCP2. Interacts with DDX17 in an RNA-independent manner. Interacts with PNRC2. Interacts with SMAD4. Interacts with UPF1. Interacts with ZC3HAV1. Interacts with ZFP36L1. Interacts with NBDY. Interacts with DHX34; the interaction is RNA-independent. In terms of processing, (Microbial infection) Cleaved by porcine reproductive and respiratory syndrome virus serine protease nsp4 after Glu-238. The cleavage inhibits DCP1A function.

The protein resides in the cytoplasm. It localises to the P-body. It is found in the nucleus. The catalysed reaction is a 5'-end (N(7)-methyl 5'-triphosphoguanosine)-ribonucleoside in mRNA + H2O = N(7)-methyl-GDP + a 5'-end phospho-ribonucleoside in mRNA + 2 H(+). Its function is as follows. Necessary for the degradation of mRNAs, both in normal mRNA turnover and in nonsense-mediated mRNA decay. Removes the 7-methyl guanine cap structure from mRNA molecules, yielding a 5'-phosphorylated mRNA fragment and 7m-GDP. Contributes to the transactivation of target genes after stimulation by TGFB1. Essential for embryonic development. The protein is mRNA-decapping enzyme 1A (DCP1A) of Sus scrofa (Pig).